A 230-amino-acid polypeptide reads, in one-letter code: MAVVSLSEMMEAGAHFGHQTRRWNPKMSRYIYSARNGVHIIDLVKTAVCMNSAYKWTRGAARSGKRFLFVGTKKQASEVVAQEAIRCGASYVNQRWLGGMLTNWTTMKARIDRLKDLERMESSGAIAMRPKKEGAVLRRELERLQKYLGGLKGMRRLPDVVVLVDQRRETNAVLEARKLDIPLVSMLDTNCDPDLCEIPIPCNDDAVRSVQLVLGRLADAINEGRHGPNE.

This sequence belongs to the universal ribosomal protein uS2 family.

The chain is Small ribosomal subunit protein uS2 from Prochlorococcus marinus (strain NATL2A).